The primary structure comprises 446 residues: Maltoporin (446 aa).

Residues 1–25 (MMITLRKLPLAVAVAAGVMSAQAMA) form the signal peptide.

Belongs to the porin LamB (TC 1.B.3) family. As to quaternary structure, homotrimer formed of three 18-stranded antiparallel beta-barrels, containing three independent channels.

The protein localises to the cell outer membrane. It carries out the reaction beta-maltose(in) = beta-maltose(out). Involved in the transport of maltose and maltodextrins. This Escherichia coli O7:K1 (strain IAI39 / ExPEC) protein is Maltoporin.